Reading from the N-terminus, the 277-residue chain is Putative ankyrin repeat protein L81 (277 aa).

2 ANK repeats span residues 150 to 179 (FGQT…DLHQ) and 183 to 215 (QGRS…DLYQ).

This is Putative ankyrin repeat protein L81 from Acanthamoeba polyphaga (Amoeba).